A 1131-amino-acid chain; its full sequence is Probable pre-mRNA-splicing factor ATP-dependent RNA helicase mog-1 (1131 aa).

Composition is skewed to basic and acidic residues over residues 1–12 (MSDKRADGRLEG), 65–122 (RGVT…DRSG), 139–148 (WDQDDREGSS), 160–173 (RGER…DSER), 180–225 (RSER…WEEE), and 407–416 (GNYKESHQFA). Disordered stretches follow at residues 1–225 (MSDK…WEEE) and 389–416 (MGVK…HQFA). The Helicase ATP-binding domain occupies 451 to 614 (MNVIRENNVV…FGGNCPTFTI (164 aa)). 464-471 (GETGSGKT) serves as a coordination point for ATP. The short motif at 561–564 (DEAH) is the DEAH box element. The region spanning 629 to 812 (PVEDYVDAAV…NVVLLLKSLG (184 aa)) is the Helicase C-terminal domain. Basic and acidic residues-rich tracts occupy residues 1085-1114 (EMRE…RRVV) and 1121-1131 (ARSERRKLWGL). Residues 1085–1131 (EMREAQKEMERRKEESDKAFKRPESSRRVVEVGSKSARSERRKLWGL) form a disordered region.

It belongs to the DEAD box helicase family. DEAH subfamily. PRP16 sub-subfamily.

The protein localises to the nucleus. It catalyses the reaction ATP + H2O = ADP + phosphate + H(+). Its function is as follows. Probable ATP-binding RNA helicase involved in pre-mRNA splicing. This is Probable pre-mRNA-splicing factor ATP-dependent RNA helicase mog-1 (mog-1) from Caenorhabditis elegans.